A 626-amino-acid chain; its full sequence is DNA primase (626 aa).

The segment at C39 to C63 adopts a CHC2-type zinc-finger fold. The Toprim domain occupies E264–G346. Mg(2+)-binding residues include E270, D314, and D316.

Belongs to the DnaG primase family. As to quaternary structure, monomer. Interacts with DnaB. Zn(2+) serves as cofactor. Mg(2+) is required as a cofactor.

The catalysed reaction is ssDNA + n NTP = ssDNA/pppN(pN)n-1 hybrid + (n-1) diphosphate.. RNA polymerase that catalyzes the synthesis of short RNA molecules used as primers for DNA polymerase during DNA replication. In Listeria innocua serovar 6a (strain ATCC BAA-680 / CLIP 11262), this protein is DNA primase.